Reading from the N-terminus, the 288-residue chain is MGHTRRQGTSPSKCPYLNFFQLLVLAGLSHFCSGVIHVTKEVKEVATLSCGHNVSVEELAQTRIYWQKEKKMVLTMMSGDMNIWPEYKNRTIFDITNNLSIVILALRPSDEGTYECVVLKYEKDAFKREHLAEVTLSVKADFPTPSISDFEIPTSNIRRIICSTSGGFPEPHLSWLENGEELNAINTTVSQDPETELYAVSSKLDFNMTTNHSFMCLIKYGHLRVNQTFNWNTTKQEHFPDNLLPSWAITLISVNGIFVICCLTYCFAPRCRERRRNERLRRESVRPV.

Positions 1–34 are cleaved as a signal peptide; the sequence is MGHTRRQGTSPSKCPYLNFFQLLVLAGLSHFCSG. The region spanning 35-135 is the Ig-like V-type domain; sequence VIHVTKEVKE…FKREHLAEVT (101 aa). At 35–242 the chain is on the extracellular side; the sequence is VIHVTKEVKE…TTKQEHFPDN (208 aa). 2 disulfide bridges follow: cysteine 50-cysteine 116 and cysteine 162-cysteine 216. Asparagine 53, asparagine 89, asparagine 98, asparagine 186, asparagine 207, asparagine 211, asparagine 226, and asparagine 232 each carry an N-linked (GlcNAc...) asparagine glycan. In terms of domain architecture, Ig-like C2-type spans 145–230; it reads PSISDFEIPT…GHLRVNQTFN (86 aa). Residues 243–263 form a helical membrane-spanning segment; that stretch reads LLPSWAITLISVNGIFVICCL. S-palmitoyl cysteine attachment occurs at residues cysteine 261, cysteine 262, cysteine 266, and cysteine 271. Residues 264–288 lie on the Cytoplasmic side of the membrane; the sequence is TYCFAPRCRERRRNERLRRESVRPV. Serine 284 is modified (phosphoserine).

In terms of assembly, homodimer. Interacts with CTLA4; this interaction inhibits T-cell activation. Interacts with PDL1/CD274; this interaction blocks PDL1/PDCD1 binding and thus PDL1/CD274 inhibitory function. Interacts with CD28. As to quaternary structure, (Microbial infection) Interacts with adenovirus subgroup B fiber proteins. (Microbial infection) Interacts with Orthopoxvirus OPG038/M2 protein, inhibiting the interaction with CTLA4/CD152. Post-translationally, palmitoylated by ZDHHC20; palmitoylation protects CD80 from ubiquitin-mediated degradation, regulating the protein stability, and ensures its accurate plasma membrane localization. Expressed on activated B-cells, macrophages and dendritic cells.

It localises to the cell membrane. Its function is as follows. Costimulatory molecule that belongs to the immunoglobulin superfamily that plays an important role in T-lymphocyte activation. Acts as the primary auxiliary signal augmenting the MHC/TCR signal in naive T-cells together with the CD28 receptor which is constitutively expressed on the cell surface of T-cells. In turn, activates different signaling pathways such as NF-kappa-B or MAPK leading to the production of different cytokines. In addition, CD28/CD80 costimulatory signal stimulates glucose metabolism and ATP synthesis of T-cells by activating the PI3K/Akt signaling pathway. Also acts as a regulator of PDL1/PDCD1 interactions to limit excess engagement of PDL1 and its inhibitory role in immune responses. Expressed on B-cells, plays a critical role in regulating interactions between B-cells and T-cells in both early and late germinal center responses, which are crucial for the generation of effective humoral immune responses. In terms of biological role, (Microbial infection) Acts as a receptor for adenovirus subgroup B. This Homo sapiens (Human) protein is T-lymphocyte activation antigen CD80 (CD80).